Reading from the N-terminus, the 321-residue chain is MRTSQQAVNRVVLIGGGSVGVSYAFALMNQGVTEELAIIDLDADKALGDVMDLNHGKAFAPSLTNVWLGEYGDCKDADIVCICAGANQQSGETRLDLVEKNMKIFKEIVTDVMNSGFNGIFLIATNPVDILTQAVISFSGLPPHRVIGSGTTLDTARLRYELGEYFHLSPKNIHAYIIGEHGDTELPLWSTATIGTVPLLTYLNRSESYTTEDLDDIFTNVRDAAYRIIQKKGATYYGIAMSLVRVTEAILKDEHSILTTSSFLQGEYGVDNVCIGVPTIINRNGVSEIIEVPMNEDEQKQFNHSVQTLKGIYEPTMQMMK.

NAD(+) contacts are provided by residues Val-19, Asp-40, Lys-45, Tyr-71, and 85 to 86 (GA). Substrate is bound by residues Gln-88, Arg-94, and 126–129 (NPVD). NAD(+) is bound by residues 124-126 (ATN) and Ser-149. 154-157 (DTAR) provides a ligand contact to substrate. Positions 159 and 174 each coordinate beta-D-fructose 1,6-bisphosphate. His-181 functions as the Proton acceptor in the catalytic mechanism. A Phosphotyrosine modification is found at Tyr-226. Residue Thr-235 coordinates substrate.

The protein belongs to the LDH/MDH superfamily. LDH family. As to quaternary structure, homotetramer.

The protein localises to the cytoplasm. It carries out the reaction (S)-lactate + NAD(+) = pyruvate + NADH + H(+). It participates in fermentation; pyruvate fermentation to lactate; (S)-lactate from pyruvate: step 1/1. Allosterically activated by fructose 1,6-bisphosphate (FBP). In terms of biological role, catalyzes the conversion of lactate to pyruvate. The sequence is that of L-lactate dehydrogenase from Oceanobacillus iheyensis (strain DSM 14371 / CIP 107618 / JCM 11309 / KCTC 3954 / HTE831).